The sequence spans 142 residues: Alpha-lactalbumin (142 aa).

Positions 1–19 are cleaved as a signal peptide; the sequence is MMSFVSLLLVGILFHATQA. Residues 20–142 enclose the C-type lysozyme domain; that stretch reads EQLTKCEVFQ…KLDQWLCEKL (123 aa). 4 disulfide bridges follow: C25/C139, C47/C130, C80/C96, and C92/C110. N-linked (GlcNAc...) asparagine glycans are attached at residues N64 and N93. Ca(2+) contacts are provided by K98, D101, D103, D106, and D107.

This sequence belongs to the glycosyl hydrolase 22 family. As to quaternary structure, lactose synthase (LS) is a heterodimer of a catalytic component, beta1,4-galactosyltransferase (beta4Gal-T1) and a regulatory component, alpha-lactalbumin (LA). As to expression, mammary gland specific. Secreted in milk.

It localises to the secreted. Its function is as follows. Regulatory subunit of lactose synthase, changes the substrate specificity of galactosyltransferase in the mammary gland making glucose a good acceptor substrate for this enzyme. This enables LS to synthesize lactose, the major carbohydrate component of milk. In other tissues, galactosyltransferase transfers galactose onto the N-acetylglucosamine of the oligosaccharide chains in glycoproteins. This Capra hircus (Goat) protein is Alpha-lactalbumin (LALBA).